Consider the following 137-residue polypeptide: Small ribosomal subunit protein uS19 (137 aa).

Positions 115 to 137 are disordered; sequence RNRVSHGSAGVGATRSSKFVPLK.

This sequence belongs to the universal ribosomal protein uS19 family.

Functionally, protein S19 forms a complex with S13 that binds strongly to the 16S ribosomal RNA. The sequence is that of Small ribosomal subunit protein uS19 from Methanococcoides burtonii (strain DSM 6242 / NBRC 107633 / OCM 468 / ACE-M).